The primary structure comprises 1206 residues: DNA-directed RNA polymerase subunit beta' (1206 aa).

Zn(2+) contacts are provided by Cys-60, Cys-62, Cys-75, and Cys-78. Mg(2+) contacts are provided by Asp-449, Asp-451, and Asp-453. Positions 822, 896, 903, and 906 each coordinate Zn(2+).

This sequence belongs to the RNA polymerase beta' chain family. In terms of assembly, the RNAP catalytic core consists of 2 alpha, 1 beta, 1 beta' and 1 omega subunit. When a sigma factor is associated with the core the holoenzyme is formed, which can initiate transcription. Requires Mg(2+) as cofactor. Zn(2+) is required as a cofactor.

The enzyme catalyses RNA(n) + a ribonucleoside 5'-triphosphate = RNA(n+1) + diphosphate. DNA-dependent RNA polymerase catalyzes the transcription of DNA into RNA using the four ribonucleoside triphosphates as substrates. The polypeptide is DNA-directed RNA polymerase subunit beta' (Staphylococcus haemolyticus (strain JCSC1435)).